A 441-amino-acid polypeptide reads, in one-letter code: Probable cytosolic Fe-S cluster assembly factor v1g210509 (441 aa).

[4Fe-4S] cluster-binding residues include cysteine 24, cysteine 72, cysteine 75, cysteine 78, cysteine 196, cysteine 252, and cysteine 401.

This sequence belongs to the NARF family.

In terms of biological role, component of the cytosolic iron-sulfur (Fe/S) protein assembly machinery. Required for maturation of extramitochondrial Fe/S proteins. This is Probable cytosolic Fe-S cluster assembly factor v1g210509 from Nematostella vectensis (Starlet sea anemone).